We begin with the raw amino-acid sequence, 315 residues long: Heterodimeric geranylgeranyl pyrophosphate synthase small subunit 1, chloroplastic (315 aa).

Mg(2+) contacts are provided by aspartate 124 and glycine 130. Residues lysine 228, glutamine 265, and lysine 280 each coordinate dimethylallyl diphosphate.

Belongs to the FPP/GGPP synthase family. In terms of assembly, part of a heterodimeric geranyl(geranyl)diphosphate synthase. The cofactor is Mg(2+). As to expression, mainly expressed in trichomes, and, to a lower extent, in roots, leaves, flowers and stems.

It is found in the plastid. Its subcellular location is the chloroplast thylakoid membrane. The protein resides in the chloroplast. In terms of biological role, heterodimeric geranyl(geranyl)-diphosphate (GPP) synthase small subunit. The small subunit alone is inactive in vitro while the large subunit GGPPS1 catalyzes mainly the production of geranygeranyl-diphosphate in vitro. Upon association of the two subunits, the product profile changes and the production of gerany-diphosphate is strongly increased. The sequence is that of Heterodimeric geranylgeranyl pyrophosphate synthase small subunit 1, chloroplastic from Cannabis sativa (Hemp).